The primary structure comprises 480 residues: Aspartyl/glutamyl-tRNA(Asn/Gln) amidotransferase subunit B (480 aa).

This sequence belongs to the GatB/GatE family. GatB subfamily. As to quaternary structure, heterotrimer of A, B and C subunits.

It catalyses the reaction L-glutamyl-tRNA(Gln) + L-glutamine + ATP + H2O = L-glutaminyl-tRNA(Gln) + L-glutamate + ADP + phosphate + H(+). It carries out the reaction L-aspartyl-tRNA(Asn) + L-glutamine + ATP + H2O = L-asparaginyl-tRNA(Asn) + L-glutamate + ADP + phosphate + 2 H(+). Allows the formation of correctly charged Asn-tRNA(Asn) or Gln-tRNA(Gln) through the transamidation of misacylated Asp-tRNA(Asn) or Glu-tRNA(Gln) in organisms which lack either or both of asparaginyl-tRNA or glutaminyl-tRNA synthetases. The reaction takes place in the presence of glutamine and ATP through an activated phospho-Asp-tRNA(Asn) or phospho-Glu-tRNA(Gln). The protein is Aspartyl/glutamyl-tRNA(Asn/Gln) amidotransferase subunit B of Hahella chejuensis (strain KCTC 2396).